A 356-amino-acid polypeptide reads, in one-letter code: UDP-N-acetylglucosamine--N-acetylmuramyl-(pentapeptide) pyrophosphoryl-undecaprenol N-acetylglucosamine transferase (356 aa).

Positions 166, 196, and 290 each coordinate UDP-N-acetyl-alpha-D-glucosamine.

This sequence belongs to the glycosyltransferase 28 family. MurG subfamily.

The protein localises to the cell membrane. It catalyses the reaction Mur2Ac(oyl-L-Ala-gamma-D-Glu-L-Lys-D-Ala-D-Ala)-di-trans,octa-cis-undecaprenyl diphosphate + UDP-N-acetyl-alpha-D-glucosamine = beta-D-GlcNAc-(1-&gt;4)-Mur2Ac(oyl-L-Ala-gamma-D-Glu-L-Lys-D-Ala-D-Ala)-di-trans,octa-cis-undecaprenyl diphosphate + UDP + H(+). The protein operates within cell wall biogenesis; peptidoglycan biosynthesis. Cell wall formation. Catalyzes the transfer of a GlcNAc subunit on undecaprenyl-pyrophosphoryl-MurNAc-pentapeptide (lipid intermediate I) to form undecaprenyl-pyrophosphoryl-MurNAc-(pentapeptide)GlcNAc (lipid intermediate II). This chain is UDP-N-acetylglucosamine--N-acetylmuramyl-(pentapeptide) pyrophosphoryl-undecaprenol N-acetylglucosamine transferase, found in Staphylococcus aureus (strain MW2).